The primary structure comprises 541 residues: Light-independent protochlorophyllide reductase subunit B (541 aa).

Residue aspartate 36 participates in [4Fe-4S] cluster binding. Aspartate 287 serves as the catalytic Proton donor. 422-423 (GL) serves as a coordination point for substrate.

Belongs to the ChlB/BchB/BchZ family. As to quaternary structure, protochlorophyllide reductase is composed of three subunits; BchL, BchN and BchB. Forms a heterotetramer of two BchB and two BchN subunits. Requires [4Fe-4S] cluster as cofactor.

The enzyme catalyses chlorophyllide a + oxidized 2[4Fe-4S]-[ferredoxin] + 2 ADP + 2 phosphate = protochlorophyllide a + reduced 2[4Fe-4S]-[ferredoxin] + 2 ATP + 2 H2O. Its pathway is porphyrin-containing compound metabolism; bacteriochlorophyll biosynthesis (light-independent). Its function is as follows. Component of the dark-operative protochlorophyllide reductase (DPOR) that uses Mg-ATP and reduced ferredoxin to reduce ring D of protochlorophyllide (Pchlide) to form chlorophyllide a (Chlide). This reaction is light-independent. The NB-protein (BchN-BchB) is the catalytic component of the complex. The polypeptide is Light-independent protochlorophyllide reductase subunit B (Rhodopseudomonas palustris (strain HaA2)).